The primary structure comprises 160 residues: Large ribosomal subunit protein bL19 (160 aa).

Belongs to the bacterial ribosomal protein bL19 family.

This protein is located at the 30S-50S ribosomal subunit interface and may play a role in the structure and function of the aminoacyl-tRNA binding site. This Prochlorococcus marinus subsp. pastoris (strain CCMP1986 / NIES-2087 / MED4) protein is Large ribosomal subunit protein bL19.